The chain runs to 779 residues: Tricorn protease-interacting factor F3 (779 aa).

Substrate contacts are provided by residues Glu-102 and 231-235 (GAMEN). His-266 is a binding site for Zn(2+). The Proton acceptor role is filled by Glu-267. The Zn(2+) site is built by His-270 and Glu-289.

It belongs to the peptidase M1 family. Part of the tricorn proteolytic complex. Zn(2+) serves as cofactor.

The protein resides in the cytoplasm. In terms of biological role, proteases F1, F2 and F3 degrade oligopeptides produced by Tricorn (themselves probably produced by the proteasome), yielding free amino acids. The protein is Tricorn protease-interacting factor F3 (trf3) of Thermoplasma volcanium (strain ATCC 51530 / DSM 4299 / JCM 9571 / NBRC 15438 / GSS1).